The sequence spans 156 residues: Small ribosomal subunit protein uS10m (156 aa).

The protein belongs to the universal ribosomal protein uS10 family.

The protein resides in the mitochondrion. Ribosomal protein required for normal mitochondrial function and normal larval development. Thought to have a role in insulin/IGF signaling. The polypeptide is Small ribosomal subunit protein uS10m (mrps-10) (Caenorhabditis elegans).